Consider the following 460-residue polypeptide: MALWGGRFTQAADKRFKDFNDSLRFDYRLAEQDIEGSIGWSKALVSVNILTQDEQRQLEKALNELLIEVRSNPQAILQDDAEDIHSWVESKLIDKVGNLGKKLHTGRSRNDQVALDIKMWCKAQVLELQKTVRELQAKLVLTAENTQHAVMPGYTHLQRAQPISFAHWCMAYVEMLERDYTRLGDAYQRMNACPLGSGALAGTAYPIDREQLAQDLDFASATRNSLDSVSDRDHIIELLSTASLSMAHLSRFAEDMIIFNSGEADFVELSDRVTSGSSLMPQKKNPDACELIRGKTGRVIGSLMGMLTTVKGLPLAYNKDMQEDKEGIFDALDTWHDCLTMAAFVLEDIKVNVERTREAALKGYSNATELADYLVAKGVPFRDSHHIVGETVVYAIKVHKGLEDLTVDEFRQFSDVVSDDVYDILSLQSCLDKRCAKGGVSPLRVAEAIADAKQRIGLNA.

The protein belongs to the lyase 1 family. Argininosuccinate lyase subfamily.

The protein resides in the cytoplasm. The catalysed reaction is 2-(N(omega)-L-arginino)succinate = fumarate + L-arginine. Its pathway is amino-acid biosynthesis; L-arginine biosynthesis; L-arginine from L-ornithine and carbamoyl phosphate: step 3/3. This Actinobacillus succinogenes (strain ATCC 55618 / DSM 22257 / CCUG 43843 / 130Z) protein is Argininosuccinate lyase.